We begin with the raw amino-acid sequence, 370 residues long: 4-hydroxy-3-methylbut-2-en-1-yl diphosphate synthase (flavodoxin) (370 aa).

[4Fe-4S] cluster is bound by residues C271, C274, C306, and E313.

This sequence belongs to the IspG family. [4Fe-4S] cluster is required as a cofactor.

It carries out the reaction (2E)-4-hydroxy-3-methylbut-2-enyl diphosphate + oxidized [flavodoxin] + H2O + 2 H(+) = 2-C-methyl-D-erythritol 2,4-cyclic diphosphate + reduced [flavodoxin]. It participates in isoprenoid biosynthesis; isopentenyl diphosphate biosynthesis via DXP pathway; isopentenyl diphosphate from 1-deoxy-D-xylulose 5-phosphate: step 5/6. Functionally, converts 2C-methyl-D-erythritol 2,4-cyclodiphosphate (ME-2,4cPP) into 1-hydroxy-2-methyl-2-(E)-butenyl 4-diphosphate. The sequence is that of 4-hydroxy-3-methylbut-2-en-1-yl diphosphate synthase (flavodoxin) from Actinobacillus pleuropneumoniae serotype 5b (strain L20).